The following is a 485-amino-acid chain: Outer membrane protein OprM (485 aa).

An N-terminal signal peptide occupies residues 1–17 (MKRSFLSLAVAAVVLSG). A lipid anchor (N-palmitoyl cysteine) is attached at C18. C18 carries S-diacylglycerol cysteine lipidation.

The protein belongs to the outer membrane factor (OMF) (TC 1.B.17) family. In terms of assembly, component of the MexAB-OprM multidrug efflux complex, composed of six MexA subunits forming a hexameric tube, binding to a MexB trimer, which interact with the trimeric OprM outer membrane channel protein. The OprM homotrimer forms a 135 Angstroms-long pore. It consists of a beta-barrel, which is probably inserted in the outer membrane, and an alpha-barrel formed by alpha-helices which probably spans the periplasm. In the ground state the periplasmic end is closed, while the outer membrane end opening is 6-8 Angstroms in diameter. OprM does not directly contact MexB; instead, MexA joins MexB and OprM by forming a funnel-like hexamer anchored to the inner membrane. MexA may initially form a hexameric ring complex with MexB prior to OprM, then OprM undergoes a conformational change as it contacts MexA, allowing the periplasmic gate to open. It is thought that, under high intracellular substrate concentration, MexB ejects substrate into the tunnel formed by MexA-OprM; as the substrate level declines, conformational changes in MexB cause efflux to reduce and stop and the complex shifts to the closed state. MexB subunit acts as a substrate:proton antiporter and activity is enhanced significantly when in complex with MexA and OprM, in vitro.

Its subcellular location is the cell outer membrane. With respect to regulation, export of antibiotics and solvents is dramatically decreased in the presence of the protonophore carbonyl cyanide m-chlorophenylhydrazone (CCCP), therefore may be driven by a proton gradient. Antibiotic efflux is inhibited by pyridopyrimidine derivatives, such as ABI-PP, acting by binding to a hydrophobic pocket in MexB. In terms of biological role, the outer membrane component of the MexAB-OprM efflux system that confers multidrug resistance. Functions as the major efflux pump for n-hexane and p-xylene efflux. Has been shown in one study to be involved in the active efflux of the autoinducer N-(3-oxododecanoyl) homoserine lactone, thereby playing an indirect role in quorum-sensing; but has been shown in another study not to be involved in efflux of this autoinducer. Over-expression of the pump increases antibiotic and solvent efflux capacities. Can replace the OprJ outer membrane component of the MexCD-OprJ pump; the antibiotics exported are those exported by the intact MexCD pump, showing that efflux substrate specificity is not conferred by this component. Serves as the outer membrane component for the MexXY efflux system. Implicated in the secretion of the siderophore pyoverdine. OprM is probably involved in the efflux of the siderophore across the outer membrane. The sequence is that of Outer membrane protein OprM (oprM) from Pseudomonas aeruginosa (strain ATCC 15692 / DSM 22644 / CIP 104116 / JCM 14847 / LMG 12228 / 1C / PRS 101 / PAO1).